A 211-amino-acid polypeptide reads, in one-letter code: Outer-membrane lipoprotein carrier protein (211 aa).

The first 24 residues, 1–24, serve as a signal peptide directing secretion; that stretch reads MRNRIIVSACAALAMFAIQAPAHA.

Belongs to the LolA family. As to quaternary structure, monomer.

The protein localises to the periplasm. Participates in the translocation of lipoproteins from the inner membrane to the outer membrane. Only forms a complex with a lipoprotein if the residue after the N-terminal Cys is not an aspartate (The Asp acts as a targeting signal to indicate that the lipoprotein should stay in the inner membrane). The chain is Outer-membrane lipoprotein carrier protein from Cupriavidus necator (strain ATCC 17699 / DSM 428 / KCTC 22496 / NCIMB 10442 / H16 / Stanier 337) (Ralstonia eutropha).